The following is a 383-amino-acid chain: uncharacterized protein (383 aa).

Disordered stretches follow at residues 1 to 30 (MDLCQKNETDLENGENNEIQSTEETEPTCT), 114 to 144 (ETKPPTEGGPEKDQSSPSQTQAAPQGPSTAS), 262 to 289 (GEKRPSELAKHTVVNDTPSSPSPAARTS), and 341 to 360 (AKDPRPPVITQKAKQENSPQ). A compositionally biased stretch (acidic residues) spans 10–26 (DLENGENNEIQSTEETE). Residues 128 to 141 (SSPSQTQAAPQGPS) are compositionally biased toward low complexity. The segment covering 262-271 (GEKRPSELAK) has biased composition (basic and acidic residues).

This is an uncharacterized protein from Macaca fascicularis (Crab-eating macaque).